Here is a 198-residue protein sequence, read N- to C-terminus: Na(+)-translocating NADH-quinone reductase subunit E (198 aa).

Transmembrane regions (helical) follow at residues 11–31, 39–59, 77–97, 110–130, 140–160, and 176–196; these read SIFIENLALSFFLGMCTFLAV, MGLGIAVIVVQTVAVPANNLI, FLSFITFIGVIAALVQILEMA, GIFLPLITVNCAIFGGVSFMV, VVYGVGSGAGWMLAIVAMAGI, and LGITFITAGLMALGFMSFSGI.

Belongs to the NqrDE/RnfAE family. As to quaternary structure, composed of six subunits; NqrA, NqrB, NqrC, NqrD, NqrE and NqrF.

It localises to the cell inner membrane. It catalyses the reaction a ubiquinone + n Na(+)(in) + NADH + H(+) = a ubiquinol + n Na(+)(out) + NAD(+). Its function is as follows. NQR complex catalyzes the reduction of ubiquinone-1 to ubiquinol by two successive reactions, coupled with the transport of Na(+) ions from the cytoplasm to the periplasm. NqrA to NqrE are probably involved in the second step, the conversion of ubisemiquinone to ubiquinol. The polypeptide is Na(+)-translocating NADH-quinone reductase subunit E (Aeromonas salmonicida (strain A449)).